Consider the following 565-residue polypeptide: Calcium-dependent protein kinase 21 (565 aa).

Residue Gly2 is the site of N-myristoyl glycine attachment. The interval 28-55 is disordered; that stretch reads PVPDAEAASPRKDGVDGDGDDVRGGGGG. Positions 36–50 are enriched in basic and acidic residues; that stretch reads SPRKDGVDGDGDDVR. A Protein kinase domain is found at 77-358; it reads YVLGKELGRG…AKQVLEHPWL (282 aa). Residues 83-91 and Lys106 contribute to the ATP site; that span reads LGRGEFGVT. Asp224 acts as the Proton acceptor in catalysis. Positions 364-394 are autoinhibitory domain; sequence APNVSLGDAVRARLQQFSAMNKFKKKALGVV. EF-hand domains lie at 401-436, 437-472, 473-500, and 504-539; these read EEVD…NGQP, VPEP…LKKM, SNDE…ELRE, and PNEQ…GADW. Ca(2+) contacts are provided by Asp414, Asp416, Asn418, His420, Glu425, Asp450, Asp452, Asn454, Thr456, Glu461, Asp486, Asp488, Ser490, Glu497, Asp517, Asp519, Asp521, Arg523, and Glu528.

It belongs to the protein kinase superfamily. Ser/Thr protein kinase family. CDPK subfamily. Expressed in spikelets and developing seeds.

It localises to the membrane. It catalyses the reaction L-seryl-[protein] + ATP = O-phospho-L-seryl-[protein] + ADP + H(+). It carries out the reaction L-threonyl-[protein] + ATP = O-phospho-L-threonyl-[protein] + ADP + H(+). With respect to regulation, activated by calcium. Autophosphorylation may play an important role in the regulation of the kinase activity. May play a role in signal transduction pathways that involve calcium as a second messenger. Functions in signal transduction pathways that positively regulate responses to abscisic acid (ABA) and salt stress. The chain is Calcium-dependent protein kinase 21 from Oryza sativa subsp. japonica (Rice).